A 100-amino-acid chain; its full sequence is MAAMNTDAAVLAKEAANFERISGELKGVIAQVESTGSALAAQMVGQAGTAAQAALARFHEAAAKQVQELNEISANIHTSGTQYTSTDEDQAGTLASSMNI.

Positions 80–100 (GTQYTSTDEDQAGTLASSMNI) are disordered.

The protein belongs to the WXG100 family. CFP-10 subfamily. In terms of assembly, forms a tight 1:1 complex with EsxA. An artificial EsxA-EsxB heterodimer interacts with EspA.

Its subcellular location is the secreted. Functionally, an exported protein. Plays a role in DNA conjugation, in at least a donor strain. The sequence is that of ESAT-6-like protein EsxB from Mycolicibacterium smegmatis (strain ATCC 700084 / mc(2)155) (Mycobacterium smegmatis).